Here is a 409-residue protein sequence, read N- to C-terminus: Pentatricopeptide repeat-containing protein At5g09450, mitochondrial (409 aa).

Residues 1 to 38 constitute a mitochondrion transit peptide; it reads MATRSLFHSLRCRLTNNGVLGSNFIRNAESSRFSKSYN. 6 PPR repeats span residues 155–189, 191–225, 226–256, 262–296, 298–332, and 333–367; these read TAET…DSLT, GAIT…KVSP, DIFT…MRHD, GWVR…SISQ, EWIT…NQIL, and SSRS…KTTE.

It belongs to the PPR family. P subfamily.

It is found in the mitochondrion. The chain is Pentatricopeptide repeat-containing protein At5g09450, mitochondrial from Arabidopsis thaliana (Mouse-ear cress).